Consider the following 395-residue polypeptide: Cyclomarin C epoxidase CymV (395 aa).

This sequence belongs to the cytochrome P450 family.

In terms of biological role, cytochrome P450; part of the gene cluster that mediates the biosynthesis of cyclic heptapeptides, known as cyclomarins and also of cyclic dipeptides, called cyclomarazines, which have both antimicrobial and cytotoxic effects. First, CymD catalyzes the reverse N-prenylation of monomeric L-tryptophan with dimethylallyl diphosphate (DMAPP) to form N-(1,1-dimethylallyl)-tryptophan (r-N-DMAT). The N-(1,1-dimethylallyl)-tryptophan produced by CymD is then combined with a range of standard and nonproteinogenic amino acid substrates to synthesize the peptides, a process that is probably catalyzed by the non-canonical nonribosomal peptide synthetase (NRPS), CymA. Other proteins in the cluster catalyze further modifications of the peptides including CymV which catalyzes the oxidation of olefinic cyclomarins and cyclomarazines to their respective epoxide derivatives. This is Cyclomarin C epoxidase CymV from Salinispora arenicola (strain CNS-205).